Here is a 43-residue protein sequence, read N- to C-terminus: Protein PsbN (43 aa).

The chain crosses the membrane as a helical span at residues 7-27 (ITIFLSCFLVGVTGYALYTAF).

The protein belongs to the PsbN family.

It is found in the plastid. It localises to the chloroplast thylakoid membrane. In terms of biological role, may play a role in photosystem I and II biogenesis. The chain is Protein PsbN from Klebsormidium bilatum (Filamentous green alga).